Consider the following 229-residue polypeptide: Potassium/proton antiporter CemA (229 aa).

A run of 4 helical transmembrane segments spans residues 7–27 (FTPL…SLSF), 114–134 (IICF…LVIL), 154–174 (ILLV…ELMI), and 189–209 (IISG…KYWI).

This sequence belongs to the CemA family.

It is found in the plastid. The protein localises to the chloroplast inner membrane. The enzyme catalyses K(+)(in) + H(+)(out) = K(+)(out) + H(+)(in). Contributes to K(+)/H(+) antiport activity by supporting proton efflux to control proton extrusion and homeostasis in chloroplasts in a light-dependent manner to modulate photosynthesis. Prevents excessive induction of non-photochemical quenching (NPQ) under continuous-light conditions. Indirectly promotes efficient inorganic carbon uptake into chloroplasts. This chain is Potassium/proton antiporter CemA, found in Acorus calamus var. americanus (American sweet flag).